Consider the following 280-residue polypeptide: Aspartate/glutamate leucyltransferase (280 aa).

This sequence belongs to the R-transferase family. Bpt subfamily.

The protein localises to the cytoplasm. It carries out the reaction N-terminal L-glutamyl-[protein] + L-leucyl-tRNA(Leu) = N-terminal L-leucyl-L-glutamyl-[protein] + tRNA(Leu) + H(+). The catalysed reaction is N-terminal L-aspartyl-[protein] + L-leucyl-tRNA(Leu) = N-terminal L-leucyl-L-aspartyl-[protein] + tRNA(Leu) + H(+). Functionally, functions in the N-end rule pathway of protein degradation where it conjugates Leu from its aminoacyl-tRNA to the N-termini of proteins containing an N-terminal aspartate or glutamate. In Cereibacter sphaeroides (strain ATCC 17023 / DSM 158 / JCM 6121 / CCUG 31486 / LMG 2827 / NBRC 12203 / NCIMB 8253 / ATH 2.4.1.) (Rhodobacter sphaeroides), this protein is Aspartate/glutamate leucyltransferase.